The sequence spans 294 residues: tRNA dimethylallyltransferase (294 aa).

Gly10–Thr17 lines the ATP pocket. Thr12–Thr17 is a substrate binding site. Residues Asp35–Gln38 form an interaction with substrate tRNA region.

Belongs to the IPP transferase family. In terms of assembly, monomer. Mg(2+) is required as a cofactor.

It carries out the reaction adenosine(37) in tRNA + dimethylallyl diphosphate = N(6)-dimethylallyladenosine(37) in tRNA + diphosphate. Its function is as follows. Catalyzes the transfer of a dimethylallyl group onto the adenine at position 37 in tRNAs that read codons beginning with uridine, leading to the formation of N6-(dimethylallyl)adenosine (i(6)A). This Streptococcus pneumoniae (strain P1031) protein is tRNA dimethylallyltransferase.